The following is a 288-amino-acid chain: Elongation factor Ts (288 aa).

The segment at 79 to 82 is involved in Mg(2+) ion dislocation from EF-Tu; that stretch reads TDFV.

The protein belongs to the EF-Ts family.

The protein resides in the cytoplasm. Functionally, associates with the EF-Tu.GDP complex and induces the exchange of GDP to GTP. It remains bound to the aminoacyl-tRNA.EF-Tu.GTP complex up to the GTP hydrolysis stage on the ribosome. This is Elongation factor Ts from Ehrlichia chaffeensis (strain ATCC CRL-10679 / Arkansas).